The primary structure comprises 144 residues: 3-hydroxyacyl-[acyl-carrier-protein] dehydratase FabZ (144 aa).

H48 is a catalytic residue.

Belongs to the thioester dehydratase family. FabZ subfamily.

It localises to the cytoplasm. The catalysed reaction is a (3R)-hydroxyacyl-[ACP] = a (2E)-enoyl-[ACP] + H2O. Functionally, involved in unsaturated fatty acids biosynthesis. Catalyzes the dehydration of short chain beta-hydroxyacyl-ACPs and long chain saturated and unsaturated beta-hydroxyacyl-ACPs. This is 3-hydroxyacyl-[acyl-carrier-protein] dehydratase FabZ from Bacillus cereus (strain AH187).